Here is a 471-residue protein sequence, read N- to C-terminus: 3-isopropylmalate dehydratase large subunit (471 aa).

3 residues coordinate [4Fe-4S] cluster: Cys347, Cys407, and Cys410.

The protein belongs to the aconitase/IPM isomerase family. LeuC type 1 subfamily. In terms of assembly, heterodimer of LeuC and LeuD. [4Fe-4S] cluster is required as a cofactor.

The catalysed reaction is (2R,3S)-3-isopropylmalate = (2S)-2-isopropylmalate. The protein operates within amino-acid biosynthesis; L-leucine biosynthesis; L-leucine from 3-methyl-2-oxobutanoate: step 2/4. Functionally, catalyzes the isomerization between 2-isopropylmalate and 3-isopropylmalate, via the formation of 2-isopropylmaleate. This chain is 3-isopropylmalate dehydratase large subunit, found in Edwardsiella ictaluri (strain 93-146).